Here is a 591-residue protein sequence, read N- to C-terminus: Isocitrate dehydrogenase kinase/phosphatase (591 aa).

Residues 315–321 (APGVKGM) and K336 contribute to the ATP site. The active site involves D371.

This sequence belongs to the AceK family.

It is found in the cytoplasm. It carries out the reaction L-seryl-[isocitrate dehydrogenase] + ATP = O-phospho-L-seryl-[isocitrate dehydrogenase] + ADP + H(+). Functionally, bifunctional enzyme which can phosphorylate or dephosphorylate isocitrate dehydrogenase (IDH) on a specific serine residue. This is a regulatory mechanism which enables bacteria to bypass the Krebs cycle via the glyoxylate shunt in response to the source of carbon. When bacteria are grown on glucose, IDH is fully active and unphosphorylated, but when grown on acetate or ethanol, the activity of IDH declines drastically concomitant with its phosphorylation. The chain is Isocitrate dehydrogenase kinase/phosphatase from Pectobacterium carotovorum subsp. carotovorum (strain PC1).